We begin with the raw amino-acid sequence, 922 residues long: Pertactin autotransporter (922 aa).

Residues methionine 1 to alanine 34 form the signal peptide. The Cell attachment site; involved in adhesion to various eukaryotic cell lines signature appears at arginine 260 to aspartate 262. Repeat copies occupy residues glycine 266–proline 270, glycine 271–proline 275, and glycine 276–proline 280. The segment at glycine 266 to tryptophan 290 is 4 X 5 AA tandem repeats of G-G-A-V-P. One copy of the 4; approximate repeat lies at glycine 281 to proline 285. Residues serine 561 to serine 619 form a disordered region. The span at proline 568–proline 613 shows a compositional bias: pro residues. A 9 X 3 AA approximate repeats of P-Q-P region spans residues proline 575–arginine 603. The 269-residue stretch at leucine 654–tryptophan 922 folds into the Autotransporter domain.

Monomer.

It localises to the periplasm. It is found in the secreted. The protein resides in the cell surface. Its subcellular location is the cell outer membrane. In terms of biological role, agglutinogen that binds to eukaryotic cells; a process mediated by the R-G-D sequence. Pertactin may have a role in bacterial adhesion, and thus play a role in virulence. May contribute to the disease state of whooping cough. This chain is Pertactin autotransporter (prn), found in Bordetella parapertussis (strain 12822 / ATCC BAA-587 / NCTC 13253).